The primary structure comprises 501 residues: ATP synthase subunit alpha (501 aa).

Residue 169–176 participates in ATP binding; the sequence is GDRQTGKT.

Belongs to the ATPase alpha/beta chains family. F-type ATPases have 2 components, CF(1) - the catalytic core - and CF(0) - the membrane proton channel. CF(1) has five subunits: alpha(3), beta(3), gamma(1), delta(1), epsilon(1). CF(0) has three main subunits: a(1), b(2) and c(9-12). The alpha and beta chains form an alternating ring which encloses part of the gamma chain. CF(1) is attached to CF(0) by a central stalk formed by the gamma and epsilon chains, while a peripheral stalk is formed by the delta and b chains.

It is found in the cell membrane. The enzyme catalyses ATP + H2O + 4 H(+)(in) = ADP + phosphate + 5 H(+)(out). Functionally, produces ATP from ADP in the presence of a proton gradient across the membrane. The alpha chain is a regulatory subunit. The protein is ATP synthase subunit alpha of Streptococcus pneumoniae serotype 4 (strain ATCC BAA-334 / TIGR4).